Consider the following 394-residue polypeptide: Cytochrome b (394 aa).

A run of 4 helical transmembrane segments spans residues 39–59 (FGSLAGICLVIQIVTGVFLAM), 83–105 (WLLRYMHANGASMFFIVVYLHTF), 120–140 (VWCLGVVIFLLMIVTAFIGYV), and 186–206 (FFSLYHLLPFILVGASLLHLA). Residues histidine 89 and histidine 103 each coordinate heme b. Residues histidine 191 and histidine 204 each contribute to the heme b site. Residue histidine 209 coordinates a ubiquinone. The next 4 membrane-spanning stretches (helical) occupy residues 232-252 (FYVKDLVGWVAFAIFFSIWIF), 296-316 (AGGVAAIALVFICLLALPFFK), 328-348 (IYQGIFWLLLADCLLLGWIGC), and 355-374 (FVTIGQISSIVFFLFFAITP).

It belongs to the cytochrome b family. As to quaternary structure, the main subunits of complex b-c1 are: cytochrome b, cytochrome c1 and the Rieske protein. Heme b serves as cofactor.

It is found in the mitochondrion inner membrane. In terms of biological role, component of the ubiquinol-cytochrome c reductase complex (complex III or cytochrome b-c1 complex) that is part of the mitochondrial respiratory chain. The b-c1 complex mediates electron transfer from ubiquinol to cytochrome c. Contributes to the generation of a proton gradient across the mitochondrial membrane that is then used for ATP synthesis. The sequence is that of Cytochrome b (MT-CYB) from Oenothera berteroana (Bertero's evening primrose).